Consider the following 295-residue polypeptide: Deleted in azoospermia-like (295 aa).

A compositionally biased stretch (polar residues) spans 1–10; sequence MSAANPETPN. Positions 1 to 25 are disordered; that stretch reads MSAANPETPNSTISREASTQSSSAA. The span at 11–25 shows a compositional bias: low complexity; the sequence is STISREASTQSSSAA. Residues 40–115 form the RRM domain; that stretch reads NTVFVGGIDV…KKLKLGPAIR (76 aa). Positions 80–132 are homodimerization; the sequence is KGYGFVSFFNDVDVQKIVESQINFHGKKLKLGPAIRKQNLCAYHVQPRPLVFN. Positions 167 to 190 constitute a DAZ domain; sequence AYPTYPNSPVQVITGYQLPVYNYQ. Tyr276 carries the phosphotyrosine modification.

The protein belongs to the RRM DAZ family. In terms of assembly, homodimer and heterodimer. Forms a heterodimer with DAZ. Interacts with BOLL, DAZAP1 and DAZAP2. Interacts with PUM2 Multiple DAZL RRMs can bind to a single RNA containing multiple GUU triplets. As to expression, testis specific.

It is found in the cytoplasm. It localises to the nucleus. Its function is as follows. RNA-binding protein, which is essential for gametogenesis in both males and females. Plays a central role during spermatogenesis. Acts by binding to the 3'-UTR of mRNA, specifically recognizing GUU triplets, and thereby regulating the translation of key transcripts. This is Deleted in azoospermia-like (DAZL) from Macaca fascicularis (Crab-eating macaque).